Reading from the N-terminus, the 445-residue chain is UPF0210 protein SSA_2018 (445 aa).

This sequence belongs to the UPF0210 family. Homodimer.

The polypeptide is UPF0210 protein SSA_2018 (Streptococcus sanguinis (strain SK36)).